The chain runs to 390 residues: Cystathionine beta-lyase MetC (390 aa).

Lys200 bears the N6-(pyridoxal phosphate)lysine mark.

It belongs to the trans-sulfuration enzymes family. As to quaternary structure, homotetramer. It depends on pyridoxal 5'-phosphate as a cofactor.

It localises to the cytoplasm. It carries out the reaction L,L-cystathionine + H2O = L-homocysteine + pyruvate + NH4(+). The enzyme catalyses an S-substituted L-cysteine + H2O = a thiol + pyruvate + NH4(+). Its pathway is amino-acid biosynthesis; L-methionine biosynthesis via de novo pathway; L-homocysteine from L-cystathionine: step 1/1. Functionally, catalyzes the transformation of cystathionine into homocysteine. Also exhibits cysteine desulfhydrase activity in vitro, producing sulfide from cysteine. In Bacillus subtilis (strain 168), this protein is Cystathionine beta-lyase MetC (metC).